A 233-amino-acid chain; its full sequence is Large ribosomal subunit protein uL1 (233 aa).

It belongs to the universal ribosomal protein uL1 family. In terms of assembly, part of the 50S ribosomal subunit.

Functionally, binds directly to 23S rRNA. The L1 stalk is quite mobile in the ribosome, and is involved in E site tRNA release. In terms of biological role, protein L1 is also a translational repressor protein, it controls the translation of the L11 operon by binding to its mRNA. This is Large ribosomal subunit protein uL1 from Rhizobium johnstonii (strain DSM 114642 / LMG 32736 / 3841) (Rhizobium leguminosarum bv. viciae).